The primary structure comprises 564 residues: Phenylalanine--tRNA ligase beta subunit (564 aa).

Residues 286–362 (YFQNMLEVNV…IGMGLDSFKP (77 aa)) form the B5 domain. Asp-340, Asp-346, Glu-349, and Glu-350 together coordinate Mg(2+).

The protein belongs to the phenylalanyl-tRNA synthetase beta subunit family. Type 2 subfamily. Tetramer of two alpha and two beta subunits. Mg(2+) serves as cofactor.

The protein resides in the cytoplasm. The enzyme catalyses tRNA(Phe) + L-phenylalanine + ATP = L-phenylalanyl-tRNA(Phe) + AMP + diphosphate + H(+). This Borrelia turicatae (strain 91E135) protein is Phenylalanine--tRNA ligase beta subunit.